Reading from the N-terminus, the 159-residue chain is Protein-export protein SecB (159 aa).

This sequence belongs to the SecB family. Homotetramer, a dimer of dimers. One homotetramer interacts with 1 SecA dimer.

It localises to the cytoplasm. Functionally, one of the proteins required for the normal export of preproteins out of the cell cytoplasm. It is a molecular chaperone that binds to a subset of precursor proteins, maintaining them in a translocation-competent state. It also specifically binds to its receptor SecA. The protein is Protein-export protein SecB of Burkholderia vietnamiensis (strain G4 / LMG 22486) (Burkholderia cepacia (strain R1808)).